Here is a 199-residue protein sequence, read N- to C-terminus: Segregation and condensation protein B (199 aa).

This sequence belongs to the ScpB family. In terms of assembly, homodimer. Homodimerization may be required to stabilize the binding of ScpA to the Smc head domains. Component of a cohesin-like complex composed of ScpA, ScpB and the Smc homodimer, in which ScpA and ScpB bind to the head domain of Smc. The presence of the three proteins is required for the association of the complex with DNA.

It localises to the cytoplasm. Functionally, participates in chromosomal partition during cell division. May act via the formation of a condensin-like complex containing Smc and ScpA that pull DNA away from mid-cell into both cell halves. The sequence is that of Segregation and condensation protein B from Leuconostoc mesenteroides subsp. mesenteroides (strain ATCC 8293 / DSM 20343 / BCRC 11652 / CCM 1803 / JCM 6124 / NCDO 523 / NBRC 100496 / NCIMB 8023 / NCTC 12954 / NRRL B-1118 / 37Y).